The sequence spans 192 residues: Sarcoplasmic calcium-binding protein, beta chain (192 aa).

At A1 the chain carries N-acetylalanine. EF-hand domains follow at residues 4–39, 56–91, 100–135, and 136–171; these read WDNR…VTLI, IMAN…NCKG, AFKV…RSAF, and ADVK…YAQF. D17, D19, D21, D28, D69, N71, D73, E75, E80, D113, D115, D117, M119, and E124 together coordinate Ca(2+).

In terms of assembly, SCPs from crayfish, lobster, and shrimp are polymorphic dimers; three isotypes (alpha-alpha, alpha-beta, and beta-beta) have been identified.

Like parvalbumins, SCPs seem to be more abundant in fast contracting muscles, but no functional relationship can be established from this distribution. The sequence is that of Sarcoplasmic calcium-binding protein, beta chain from Penaeus sp. (Penoeid shrimp).